The chain runs to 216 residues: Somatotropin (216 aa).

Positions 1–25 are cleaved as a signal peptide; that stretch reads MAPGSWFSPLLIAVVTLGLPQEAAA. Zn(2+) is bound at residue H45. Residues C78 and C189 are joined by a disulfide bond. E198 lines the Zn(2+) pocket. A disulfide bond links C206 and C214.

It belongs to the somatotropin/prolactin family.

The protein resides in the secreted. Its function is as follows. Growth hormone plays an important role in growth control. This chain is Somatotropin (GH), found in Gallus gallus (Chicken).